A 196-amino-acid polypeptide reads, in one-letter code: Recombination protein RecR (196 aa).

A C4-type zinc finger spans residues 56-71 (CPVCGGLDSQQPCMIC). One can recognise a Toprim domain in the interval 78–172 (PLICVVETVA…SVTRLAQGVP (95 aa)).

Belongs to the RecR family.

In terms of biological role, may play a role in DNA repair. It seems to be involved in an RecBC-independent recombinational process of DNA repair. It may act with RecF and RecO. This Acidiphilium cryptum (strain JF-5) protein is Recombination protein RecR.